A 255-amino-acid chain; its full sequence is MAVGKNKRLSKGKKGLKKKVVDPFTRKEWFDIKAPSTFENRNVGKTLVNKSTGLKNAADALKGRVVEVCLADLQGSEDHSFRKIKLRVDEVQGKNLLTNFHGMDFTTDKVRSMVRKWQTLIEANVTVKTSDDYVLRVFAIAFTRKQSNQVKRTSYAQSSHIRAIRKVISEILTREVQGSTLAQLTSKLIPEVINKEIENATKDIFPLQNVHIRKVKLLKQPKFDLGSLMALHGEGSGEEKGKKVSGFKDEVLETV.

Residue alanine 2 is modified to N-acetylalanine; partial.

It belongs to the eukaryotic ribosomal protein eS1 family. As to quaternary structure, component of the small ribosomal subunit. Mature ribosomes consist of a small (40S) and a large (60S) subunit. The 40S subunit contains about 33 different proteins and 1 molecule of RNA (18S). The 60S subunit contains about 49 different proteins and 3 molecules of RNA (25S, 5.8S and 5S).

Its subcellular location is the cytoplasm. This chain is Small ribosomal subunit protein eS1, found in Vanderwaltozyma polyspora (strain ATCC 22028 / DSM 70294 / BCRC 21397 / CBS 2163 / NBRC 10782 / NRRL Y-8283 / UCD 57-17) (Kluyveromyces polysporus).